The following is a 624-amino-acid chain: MYAYNGKLLDVDLTREKVKEVELSEDVLKKFYGGRGLGTYILWKELGEKWEKVDPLGEENLLLILTGPLTGYYPGMKTSIVSKSPESNGVVGSVLSSELGLELKAAGYDGIIIRGKAKSPVYLFIHNDTVEIRDATKYWGMGGIELYKTLLKEVHEEIRKKEKLKGVPKEPAMIYIGKGGENKVRFAAIMTKLMHAAGYGGYGAVMGSKNLKAVIAKGSGPLPEVYDKEKMKVLLREFWKELFSMTTFREWGTGAGGYSVGHDRSSEPIRNWQEEYHDNEEISVVNFENRTWIKKYWADYGCPVNCMKISYLRYGPYKGSISDAPDYELQAYMGTNLGIFEPEKIVYLSYLVDELGLDGINTGNILGFAAELYQRGILTKEDLGFELNWGDEKAFAKLLHLIVEKEGIGKILAEGTYRAALKISEIKGIDVTKYAVHVKGIAVGAHGIRSELDYTKDISYAVSVQGGDHTSTAALPAKGYTGELVEAFYDSAVICNFVTKPGFEKIIEFGNALSGFNITPEQWLNEIGLRIIHLQRILLLLGGPDVYWDPRKDDDNPPRFYEPLPSGPVKGKAPNREDIKAKVKQYYEEIGYDEHGIPKEEVLEELGIGEAKREVKRIKKRLNL.

Lys-77, Ser-93, Val-94, Ser-96, His-195, Ala-196, Gly-198, and Tyr-199 together coordinate tungstopterin. The [4Fe-4S] cluster site is built by Asp-299, Cys-302, and Cys-306. 9 residues coordinate tungstopterin: Asp-353, Leu-357, Asp-358, Gly-359, Thr-470, Asp-490, Ile-494, Cys-495, and Asn-496. Cys-495 contacts [4Fe-4S] cluster. A disordered region spans residues 552–575; that stretch reads KDDDNPPRFYEPLPSGPVKGKAPN.

This sequence belongs to the AOR/FOR family. Heterodimer composed of a small WOR5-S subunit, with four [4Fe-4S] clusters, and a large WOR5-L subunit, containing the active site tungsto-bispyranopterin cofactor as well as another [4Fe-4S] cluster. [4Fe-4S] cluster serves as cofactor. The cofactor is tungstopterin.

It localises to the cytoplasm. It carries out the reaction an aliphatic sulfonate + 4 oxidized [4Fe-4S]-[ferredoxin] + 2 H2O = 4 reduced [4Fe-4S]-[ferredoxin] + a carboxylate + sulfite + 6 H(+). It catalyses the reaction an aliphatic sulfonate + 2 oxidized [4Fe-4S]-[ferredoxin] + H2O = 2 reduced [4Fe-4S]-[ferredoxin] + an aldehyde + sulfite + 3 H(+). The enzyme catalyses 2 oxidized [4Fe-4S]-[ferredoxin] + an aldehyde + H2O = 2 reduced [4Fe-4S]-[ferredoxin] + a carboxylate + 3 H(+). The catalysed reaction is 4 oxidized [4Fe-4S]-[ferredoxin] + taurine + 2 H2O = 4 reduced [4Fe-4S]-[ferredoxin] + sulfite + glycine + 6 H(+). It carries out the reaction 2 oxidized [4Fe-4S]-[ferredoxin] + taurine + H2O = aminoacetaldehyde + 2 reduced [4Fe-4S]-[ferredoxin] + sulfite + 3 H(+). It catalyses the reaction aminoacetaldehyde + 2 oxidized [4Fe-4S]-[ferredoxin] + H2O = 2 reduced [4Fe-4S]-[ferredoxin] + glycine + 3 H(+). Its function is as follows. WOR-like catalytic subunit of an oxidoreductase that can desulfonate and oxidize aliphatic sulfonates such as taurine. The activity involves two steps: an oxidative desulfonation reaction, followed by the activation of a second water molecule and oxidation of the resulting aldehyde. May be involved in the oxidation of various aliphatic sulfonates and also phosphonates. In vitro, has a broad substrate specificity with a high affinity for several substituted and nonsubstituted aliphatic and aromatic aldehydes with various chain lengths, with methyl viologen or benzyl viologen as electron acceptor. Ferredoxin is the physiological electron acceptor. This chain is Aliphatic sulfonate oxidoreductase, WOR-like subunit, found in Pyrococcus furiosus (strain ATCC 43587 / DSM 3638 / JCM 8422 / Vc1).